We begin with the raw amino-acid sequence, 461 residues long: MIKVAILGKPNVGKSSLFNRILRERDAIVSEKAGTTRDIKKREVSLDDDLEEIVLLDTGGLEERDELFNKVKEKALEVAKEADLVLYMVDGKTIPDEEEIKYFRNLQKLGKHIILVVNKIDNDKMMEKVYDFYELGADEIFPISVSHNRGVGKLIERIKKFVPKKPKTFEVSEFEQEIPLEDLLVAEENEENLEELKEIKVAIVGRVNVGKSSLLNALVGEERAIVSDVDGTTIDPIDENIYHDGWNITFVDTAGIRRRSKIKDIEKYALLRTEKVLEEADIAILVIDAKEGIVELDEKIGGLIDKHKNGVIIVANKWDENAEEFHKFRKEVYYRFKYLYFAPFLAVSAKTGRNIDKLKDEIIRVYKNYSKRIPTATLNKWIEEATIRHHLPTDIGGKEVKIFYATQYKTKPPTIALIMNRNKLHFSYRRYLVNFLRKKEDFEGTPIIFVARKKGEKHEEA.

EngA-type G domains follow at residues 2-166 (IKVA…PKKP) and 199-370 (IKVA…KNYS). Residues 8–15 (GKPNVGKS), 57–61 (DTGGL), 118–121 (NKID), 205–212 (GRVNVGKS), 252–256 (DTAGI), and 316–319 (NKWD) each bind GTP. The KH-like domain maps to 371–455 (KRIPTATLNK…PIIFVARKKG (85 aa)).

It belongs to the TRAFAC class TrmE-Era-EngA-EngB-Septin-like GTPase superfamily. EngA (Der) GTPase family. As to quaternary structure, associates with the 50S ribosomal subunit.

Its function is as follows. GTPase that plays an essential role in the late steps of ribosome biogenesis. The sequence is that of GTPase Der from Nautilia profundicola (strain ATCC BAA-1463 / DSM 18972 / AmH).